A 495-amino-acid chain; its full sequence is Rho GTPase-activating protein 19 (495 aa).

The Rho-GAP domain maps to Met98 to Phe304. Disordered stretches follow at residues Lys327–Gln362 and Lys393–Leu495. Composition is skewed to basic and acidic residues over residues Ser350–Gln362, Gln433–Val452, and Lys470–Arg481.

Functionally, GTPase activator for the Rho-type GTPases by converting them to an inactive GDP-bound state. The chain is Rho GTPase-activating protein 19 (ARHGAP19) from Gallus gallus (Chicken).